A 227-amino-acid chain; its full sequence is Phosphoribosylformylglycinamidine synthase subunit PurQ (227 aa).

A Glutamine amidotransferase type-1 domain is found at F3–V225. Residue C86 is the Nucleophile of the active site. Residues H194 and E196 contribute to the active site.

Part of the FGAM synthase complex composed of 1 PurL, 1 PurQ and 2 PurS subunits.

It is found in the cytoplasm. It carries out the reaction N(2)-formyl-N(1)-(5-phospho-beta-D-ribosyl)glycinamide + L-glutamine + ATP + H2O = 2-formamido-N(1)-(5-O-phospho-beta-D-ribosyl)acetamidine + L-glutamate + ADP + phosphate + H(+). It catalyses the reaction L-glutamine + H2O = L-glutamate + NH4(+). The protein operates within purine metabolism; IMP biosynthesis via de novo pathway; 5-amino-1-(5-phospho-D-ribosyl)imidazole from N(2)-formyl-N(1)-(5-phospho-D-ribosyl)glycinamide: step 1/2. Functionally, part of the phosphoribosylformylglycinamidine synthase complex involved in the purines biosynthetic pathway. Catalyzes the ATP-dependent conversion of formylglycinamide ribonucleotide (FGAR) and glutamine to yield formylglycinamidine ribonucleotide (FGAM) and glutamate. The FGAM synthase complex is composed of three subunits. PurQ produces an ammonia molecule by converting glutamine to glutamate. PurL transfers the ammonia molecule to FGAR to form FGAM in an ATP-dependent manner. PurS interacts with PurQ and PurL and is thought to assist in the transfer of the ammonia molecule from PurQ to PurL. This is Phosphoribosylformylglycinamidine synthase subunit PurQ from Bacillus mycoides (strain KBAB4) (Bacillus weihenstephanensis).